The primary structure comprises 396 residues: Probable tRNA sulfurtransferase (396 aa).

The THUMP domain occupies 58–169 (NQFIEKLKMV…KKNIYVFTRS (112 aa)). ATP contacts are provided by residues 187-188 (LL), 212-213 (YF), Arg269, Gly291, and Gln300.

This sequence belongs to the ThiI family.

It localises to the cytoplasm. It carries out the reaction [ThiI sulfur-carrier protein]-S-sulfanyl-L-cysteine + a uridine in tRNA + 2 reduced [2Fe-2S]-[ferredoxin] + ATP + H(+) = [ThiI sulfur-carrier protein]-L-cysteine + a 4-thiouridine in tRNA + 2 oxidized [2Fe-2S]-[ferredoxin] + AMP + diphosphate. The enzyme catalyses [ThiS sulfur-carrier protein]-C-terminal Gly-Gly-AMP + S-sulfanyl-L-cysteinyl-[cysteine desulfurase] + AH2 = [ThiS sulfur-carrier protein]-C-terminal-Gly-aminoethanethioate + L-cysteinyl-[cysteine desulfurase] + A + AMP + 2 H(+). It functions in the pathway cofactor biosynthesis; thiamine diphosphate biosynthesis. In terms of biological role, catalyzes the ATP-dependent transfer of a sulfur to tRNA to produce 4-thiouridine in position 8 of tRNAs, which functions as a near-UV photosensor. Also catalyzes the transfer of sulfur to the sulfur carrier protein ThiS, forming ThiS-thiocarboxylate. This is a step in the synthesis of thiazole, in the thiamine biosynthesis pathway. The sulfur is donated as persulfide by IscS. This Halothermothrix orenii (strain H 168 / OCM 544 / DSM 9562) protein is Probable tRNA sulfurtransferase.